The sequence spans 166 residues: MGLNITNRQGFLLVAAACAGAIGFALFAQYQLGEEPCPLCILQRIGVMAVGALALLAALHNPGKTGAKVWGGLMTLAALSGAGVSLRQLWLQSLPADQVPQCGPGLEFLMESFPLWEVLSKVLKGSGECAAIQGRFLGMTMPFWVAVFFAGVIVWTLWLVGRRRRG.

The Cytoplasmic portion of the chain corresponds to 1-10 (MGLNITNRQG). A helical membrane pass occupies residues 11–27 (FLLVAAACAGAIGFALF). Over 28-45 (AQYQLGEEPCPLCILQRI) the chain is Periplasmic. Cysteine 37 and cysteine 40 are disulfide-bonded. A helical transmembrane segment spans residues 46–62 (GVMAVGALALLAALHNP). Residues 63–69 (GKTGAKV) are Cytoplasmic-facing. The chain crosses the membrane as a helical span at residues 70–86 (WGGLMTLAALSGAGVSL). The Periplasmic portion of the chain corresponds to 87–143 (RQLWLQSLPADQVPQCGPGLEFLMESFPLWEVLSKVLKGSGECAAIQGRFLGMTMPF). A disulfide bridge connects residues cysteine 102 and cysteine 129. Residues 144-162 (WVAVFFAGVIVWTLWLVGR) form a helical membrane-spanning segment. Residues 163 to 166 (RRRG) lie on the Cytoplasmic side of the membrane.

The protein belongs to the DsbB family.

Its subcellular location is the cell inner membrane. Functionally, required for disulfide bond formation in some periplasmic proteins. Acts by oxidizing the DsbA protein. The sequence is that of Disulfide bond formation protein B from Chromobacterium violaceum (strain ATCC 12472 / DSM 30191 / JCM 1249 / CCUG 213 / NBRC 12614 / NCIMB 9131 / NCTC 9757 / MK).